A 354-amino-acid polypeptide reads, in one-letter code: Uroporphyrinogen decarboxylase (354 aa).

Residues 30 to 34, Asp79, Tyr154, Ser209, and His333 contribute to the substrate site; that span reads RQAGR.

Belongs to the uroporphyrinogen decarboxylase family. In terms of assembly, homodimer.

Its subcellular location is the cytoplasm. It catalyses the reaction uroporphyrinogen III + 4 H(+) = coproporphyrinogen III + 4 CO2. The protein operates within porphyrin-containing compound metabolism; protoporphyrin-IX biosynthesis; coproporphyrinogen-III from 5-aminolevulinate: step 4/4. Its function is as follows. Catalyzes the decarboxylation of four acetate groups of uroporphyrinogen-III to yield coproporphyrinogen-III. The polypeptide is Uroporphyrinogen decarboxylase (Mycolicibacterium gilvum (strain PYR-GCK) (Mycobacterium gilvum (strain PYR-GCK))).